The sequence spans 273 residues: Undecaprenyl-diphosphatase (273 aa).

Transmembrane regions (helical) follow at residues 6–26, 45–65, 90–110, 116–136, 190–210, 222–242, and 252–272; these read SLLI…LPVS, AKTF…VMFW, LTLI…LVFH, LFNP…LIAA, YAAS…ATVL, ADIP…LIAI, and ISFI…YVVF.

It belongs to the UppP family.

Its subcellular location is the cell inner membrane. It carries out the reaction di-trans,octa-cis-undecaprenyl diphosphate + H2O = di-trans,octa-cis-undecaprenyl phosphate + phosphate + H(+). Functionally, catalyzes the dephosphorylation of undecaprenyl diphosphate (UPP). Confers resistance to bacitracin. The polypeptide is Undecaprenyl-diphosphatase (Salmonella paratyphi C (strain RKS4594)).